The following is a 163-amino-acid chain: 2-C-methyl-D-erythritol 2,4-cyclodiphosphate synthase (163 aa).

Positions 8 and 10 each coordinate a divalent metal cation. 4-CDP-2-C-methyl-D-erythritol 2-phosphate contacts are provided by residues 8 to 10 and 34 to 35; these read DVH and HS. Residue His42 participates in a divalent metal cation binding. Residues 56-58, 132-135, Phe139, and Arg142 each bind 4-CDP-2-C-methyl-D-erythritol 2-phosphate; these read DIG and TTTE.

Belongs to the IspF family. In terms of assembly, homotrimer. A divalent metal cation is required as a cofactor.

The catalysed reaction is 4-CDP-2-C-methyl-D-erythritol 2-phosphate = 2-C-methyl-D-erythritol 2,4-cyclic diphosphate + CMP. The protein operates within isoprenoid biosynthesis; isopentenyl diphosphate biosynthesis via DXP pathway; isopentenyl diphosphate from 1-deoxy-D-xylulose 5-phosphate: step 4/6. Involved in the biosynthesis of isopentenyl diphosphate (IPP) and dimethylallyl diphosphate (DMAPP), two major building blocks of isoprenoid compounds. Catalyzes the conversion of 4-diphosphocytidyl-2-C-methyl-D-erythritol 2-phosphate (CDP-ME2P) to 2-C-methyl-D-erythritol 2,4-cyclodiphosphate (ME-CPP) with a corresponding release of cytidine 5-monophosphate (CMP). The protein is 2-C-methyl-D-erythritol 2,4-cyclodiphosphate synthase of Moorella thermoacetica (strain ATCC 39073 / JCM 9320).